The following is a 94-amino-acid chain: MEKVRLTAFVHGHVQGVGFRWWTTSQAQELKLAGSASNLSDGRVCVVAEGPQTQCEELLRRLKENPSSYRRPGHVDTVIEQWGEPRDVEGFVER.

In terms of domain architecture, Acylphosphatase-like spans 5–94 (RLTAFVHGHV…PRDVEGFVER (90 aa)). Active-site residues include arginine 20 and asparagine 38.

It belongs to the acylphosphatase family.

The catalysed reaction is an acyl phosphate + H2O = a carboxylate + phosphate + H(+). The polypeptide is Acylphosphatase (acyP) (Corynebacterium glutamicum (strain R)).